A 62-amino-acid polypeptide reads, in one-letter code: UPF0434 protein ASA_1553 (62 aa).

The protein belongs to the UPF0434 family.

The chain is UPF0434 protein ASA_1553 from Aeromonas salmonicida (strain A449).